The primary structure comprises 439 residues: Gap junction gamma-2 protein (439 aa).

At 1–25 the chain is on the cytoplasmic side; the sequence is MTNMSWSFLTRLLEEIHNHSTFVGK. Residues 26 to 46 traverse the membrane as a helical segment; the sequence is VWLTVLVVFRIVLTAVGGEAI. The Extracellular portion of the chain corresponds to 47-78; it reads YSDEQAKFTCNTRQPGCDNVCYDAFAPLSHVR. A helical transmembrane segment spans residues 79-99; the sequence is FWVFQIVVISTPSVMYLGYAV. Residues 100–216 lie on the Cytoplasmic side of the membrane; it reads HRLARASEQE…EGLMRVYVAQ (117 aa). Residues 108-178 form a disordered region; it reads QERRRALRRR…AEEAGAEEAC (71 aa). The segment covering 112 to 125 has biased composition (basic residues); that stretch reads RALRRRPGPRRAPR. The span at 140–174 shows a compositional bias: acidic residues; it reads DLGEEEPMLGLGEEEEEEETGAAEGAGEEAEEAGA. A helical membrane pass occupies residues 217 to 237; sequence LVARAAFEVAFLVGQYLLYGF. Over 238 to 265 the chain is Extracellular; that stretch reads EVRPFFPCSRQPCPHVVDCFVSRPTEKT. Residues 266 to 286 traverse the membrane as a helical segment; the sequence is VFLLVMYVVSCLCLLLNLCEM. The Cytoplasmic segment spans residues 287–439; that stretch reads AHLGLGSAQD…SRDGKTTVWI (153 aa). The segment at 364–439 is disordered; it reads AGDRDRDSSP…SRDGKTTVWI (76 aa). Phosphoserine is present on Ser-371. Low complexity predominate over residues 378-393; it reads PAASRGPPRAGAPASR.

This sequence belongs to the connexin family. Gamma-type subfamily. As to quaternary structure, a connexon is composed of a hexamer of connexins. Interacts with TJP1. In terms of tissue distribution, expressed in central nervous system, in sciatic nerve and sural nerve. Also detected in skeletal muscles.

The protein resides in the cell membrane. It localises to the cell junction. Its subcellular location is the gap junction. One gap junction consists of a cluster of closely packed pairs of transmembrane channels, the connexons, through which materials of low MW diffuse from one cell to a neighboring cell. May play a role in myelination in central and peripheral nervous systems. This is Gap junction gamma-2 protein (GJC2) from Homo sapiens (Human).